A 302-amino-acid chain; its full sequence is Beta-casein (302 aa).

The first 15 residues, 1–15, serve as a signal peptide directing secretion; it reads MKLLILTCLVALGFA. Ser-23 and Ser-25 each carry phosphoserine. Repeat copies occupy residues 144–151, 152–159, 160–167, 168–175, 176–182, 183–190, 191–198, 199–204, 205–214, 215–222, 223–230, 231–238, 241–247, 248–255, 256–262, and 263–269. The segment at 144 to 269 is 16 X approximate tandem repeats; it reads KREMLPIYER…LLPEEILPVN (126 aa).

This sequence belongs to the beta-casein family. As to expression, mammary gland specific. Secreted in milk.

The protein resides in the secreted. In terms of biological role, important role in determination of the surface properties of the casein micelles. This is Beta-casein (CSN2) from Notamacropus eugenii (Tammar wallaby).